Consider the following 405-residue polypeptide: Deoxyguanosinetriphosphate triphosphohydrolase-like protein (405 aa).

In terms of domain architecture, HD spans 75 to 219 (RLTHTIEVAQ…AAIADDIAYN (145 aa)).

The protein belongs to the dGTPase family. Type 2 subfamily.

The protein is Deoxyguanosinetriphosphate triphosphohydrolase-like protein of Rhizobium meliloti (strain 1021) (Ensifer meliloti).